The sequence spans 265 residues: MAATVAEALAVTDELALPLRAVGDLAAAAGVSREEVVVITQCASLGGKLPFDDASVGSVLAVIKKVENLGDLFITEISRVLKAGGMVLIQSSPSDQDPNNSIQRKLLLGGFVDVQASAASSQDSEHSVTIKAKKVSWSLGSSFPLKKATKGLPKIQIDDDSELIDEDSLLTEDDLKKPELPVVGDCEVGATRKACKNCTCGRAEAEEKVEKLNLTSEQINNPQSACGNCGLGDAFRCGTCPYRGLPAFKPGEKIALPGNFLAADM.

An N-terminal SAM-like domain region spans residues 1–143 (MAATVAEALA…KVSWSLGSSF (143 aa)). The interval 144 to 175 (PLKKATKGLPKIQIDDDSELIDEDSLLTEDDL) is linker. Residues Cys-186, Cys-195, Cys-198, and Cys-200 each contribute to the [2Fe-2S] cluster site. A fe-S binding site A region spans residues 186–200 (CEVGATRKACKNCTC). 4 residues coordinate [4Fe-4S] cluster: Cys-226, Cys-229, Cys-237, and Cys-240. Short sequence motifs (cx2C motif) lie at residues 226–229 (CGNC) and 237–240 (CGTC). Residues 226 to 240 (CGNCGLGDAFRCGTC) are fe-S binding site B.

It belongs to the anamorsin family. Monomer. It depends on [2Fe-2S] cluster as a cofactor. [4Fe-4S] cluster serves as cofactor.

Its subcellular location is the cytoplasm. It localises to the mitochondrion intermembrane space. Component of the cytosolic iron-sulfur (Fe-S) protein assembly (CIA) machinery. Required for the maturation of extramitochondrial Fe-S proteins. Part of an electron transfer chain functioning in an early step of cytosolic Fe-S biogenesis, facilitating the de novo assembly of a [4Fe-4S] cluster on the cytosolic Fe-S scaffold complex. Electrons are transferred from NADPH via a FAD- and FMN-containing diflavin oxidoreductase. Together with the diflavin oxidoreductase, also required for the assembly of the diferric tyrosyl radical cofactor of ribonucleotide reductase (RNR), probably by providing electrons for reduction during radical cofactor maturation in the catalytic small subunit. The protein is Anamorsin homolog 1 of Oryza sativa subsp. japonica (Rice).